The sequence spans 188 residues: Cytochrome c-type protein NrfB (188 aa).

Positions methionine 1–alanine 32 are cleaved as a signal peptide. Heme is bound by residues cysteine 49, cysteine 52, histidine 53, cysteine 78, cysteine 81, histidine 82, cysteine 113, cysteine 116, histidine 117, cysteine 138, cysteine 141, histidine 142, cysteine 163, cysteine 166, and histidine 167.

In terms of processing, binds 5 heme groups per subunit.

It is found in the periplasm. It participates in energy metabolism; nitrogen metabolism. In terms of biological role, plays a role in nitrite reduction. This Escherichia coli O6:H1 (strain CFT073 / ATCC 700928 / UPEC) protein is Cytochrome c-type protein NrfB (nrfB).